Consider the following 470-residue polypeptide: Acetyl-CoA decarbonylase/synthase complex subunit gamma 1 (470 aa).

The 4Fe-4S domain occupies 1–60 (MKINSPLEAYKYLPQTNCGECGQPTCMAFASTLIDRSGKTTDCPPLIKEKKFAKKLAELD). [4Fe-4S] cluster contacts are provided by cysteine 18, cysteine 21, cysteine 26, and cysteine 43.

In terms of assembly, heterodimer of delta and gamma chains. The ACDS complex is made up of alpha, epsilon, beta, gamma and delta chains with a probable stoichiometry of (alpha(2)epsilon(2))(4)-beta(8)-(gamma(1)delta(1))(8). It depends on corrinoid as a cofactor. [4Fe-4S] cluster serves as cofactor.

The catalysed reaction is 5,6,7,8-tetrahydrosarcinapterin + methyl-Co(III)-[corrinoid Fe-S protein] = 5-methyltetrahydrosarcinapterin + Co(I)-[corrinoid Fe-S protein] + H(+). Its pathway is one-carbon metabolism; methanogenesis from acetate. Part of a complex that catalyzes the reversible cleavage of acetyl-CoA, allowing growth on acetate as sole source of carbon and energy. This is Acetyl-CoA decarbonylase/synthase complex subunit gamma 1 from Methanosarcina mazei (strain ATCC BAA-159 / DSM 3647 / Goe1 / Go1 / JCM 11833 / OCM 88) (Methanosarcina frisia).